Here is a 233-residue protein sequence, read N- to C-terminus: Large ribosomal subunit protein uL22m (233 aa).

Belongs to the universal ribosomal protein uL22 family. In terms of assembly, component of the mitochondrial ribosome large subunit (39S) which comprises a 16S rRNA and about 50 distinct proteins.

Its subcellular location is the mitochondrion. This is Large ribosomal subunit protein uL22m (mRpL22) from Drosophila melanogaster (Fruit fly).